A 185-amino-acid chain; its full sequence is Tumor necrosis factor receptor superfamily member 17 (185 aa).

At 1–49 (MAQQCFHSEYFDSLLHACKPCHLRCSNPPATCQPYCDPSVTSSVKGTYT) the chain is on the extracellular side. One copy of the TNFR-Cys repeat lies at 4-36 (QCFHSEYFDSLLHACKPCHLRCSNPPATCQPYC). 3 cysteine pairs are disulfide-bonded: cysteine 5–cysteine 18, cysteine 21–cysteine 32, and cysteine 25–cysteine 36. The helical; Signal-anchor for type III membrane protein transmembrane segment at 50–70 (VLWIFLGLTLVLSLALFTISF) threads the bilayer. Residues 71-185 (LLRKMNPEAL…MGMEKPTHTR (115 aa)) lie on the Cytoplasmic side of the membrane.

Associates with TRAF1, TRAF2, TRAF3, TRAF5 and TRAF6. As to expression, detected in spleen, thymus, bone marrow and heart, and at lower levels in kidney and lung.

The protein resides in the membrane. In terms of biological role, receptor for TNFSF13B/BLyS/BAFF and TNFSF13/APRIL. Promotes B-cell survival and plays a role in the regulation of humoral immunity. Activates NF-kappa-B and JNK. This Mus musculus (Mouse) protein is Tumor necrosis factor receptor superfamily member 17 (Tnfrsf17).